We begin with the raw amino-acid sequence, 394 residues long: Gastricsin (394 aa).

The N-terminal stretch at 1–16 is a signal peptide; that stretch reads MKWMVVVLLCLPLLEA. The propeptide at 17–65 is activation peptide; sequence TQIKVPLKKIKSIREVLREKGLLGDFLKNHKPQHARKFFRNRLAKTGDF. Positions 79–391 constitute a Peptidase A1 domain; sequence YFGQISLGTP…DLANNRVGFA (313 aa). Aspartate 97 is an active-site residue. Intrachain disulfides connect cysteine 110–cysteine 115 and cysteine 273–cysteine 277. Threonine 283 is a catalytic residue. The cysteines at positions 316 and 349 are disulfide-linked.

This sequence belongs to the peptidase A1 family.

The protein resides in the secreted. It carries out the reaction More restricted specificity than pepsin A, but shows preferential cleavage at Tyr-|-Xaa bonds. High activity on hemoglobin.. Hydrolyzes a variety of proteins. In Cavia porcellus (Guinea pig), this protein is Gastricsin (PGC).